Reading from the N-terminus, the 92-residue chain is Small ribosomal subunit protein uS19 (92 aa).

This sequence belongs to the universal ribosomal protein uS19 family.

Its function is as follows. Protein S19 forms a complex with S13 that binds strongly to the 16S ribosomal RNA. This chain is Small ribosomal subunit protein uS19, found in Trichlorobacter lovleyi (strain ATCC BAA-1151 / DSM 17278 / SZ) (Geobacter lovleyi).